The chain runs to 298 residues: Protein OS-9 homolog (298 aa).

A signal peptide spans 1 to 25; it reads MGLAGGARVVLFVVAAAAAAALTAA. The N-linked (GlcNAc...) asparagine glycan is linked to N95. The MRH domain occupies 121 to 246; sequence DQCFYRHEGW…TVQSPMLCKN (126 aa). An intrachain disulfide couples C123 to C136. 3 residues coordinate a mannooligosaccharide derivative: W130, W131, and Q143. N171 and N197 each carry an N-linked (GlcNAc...) asparagine glycan. Intrachain disulfides connect C201-C232 and C216-C244. Positions 202, 208, 228, and 234 each coordinate a mannooligosaccharide derivative.

This sequence belongs to the OS-9 family. Interacts with HRD3.

The protein localises to the endoplasmic reticulum. Lectin which functions in endoplasmic reticulum (ER) quality control and ER-associated degradation (ERAD). May bind terminally misfolded non-glycosylated proteins as well as improperly folded glycoproteins, retain them in the ER, and possibly transfer them to the ubiquitination machinery and promote their degradation. The sequence is that of Protein OS-9 homolog from Oryza sativa subsp. japonica (Rice).